Here is a 406-residue protein sequence, read N- to C-terminus: Argininosuccinate synthase (406 aa).

Residues 13-21 (AYSGGLDTS) and Ala40 contribute to the ATP site. L-citrulline is bound by residues Tyr91 and Ser96. Gly121 lines the ATP pocket. Positions 123, 127, and 128 each coordinate L-aspartate. Asn127 serves as a coordination point for L-citrulline. L-citrulline-binding residues include Arg131, Ser182, Ser191, Glu267, and Tyr279.

Belongs to the argininosuccinate synthase family. Type 1 subfamily. In terms of assembly, homotetramer.

It is found in the cytoplasm. It carries out the reaction L-citrulline + L-aspartate + ATP = 2-(N(omega)-L-arginino)succinate + AMP + diphosphate + H(+). Its pathway is amino-acid biosynthesis; L-arginine biosynthesis; L-arginine from L-ornithine and carbamoyl phosphate: step 2/3. In Brucella abortus (strain S19), this protein is Argininosuccinate synthase.